The following is an 89-amino-acid chain: MNLSLILFLIGILGFVLNRKNIILMLISIEIILLSVTFLILISSLNFDDILGQTFAIYIITIAGAESAIGLGILVAFYRLRGSIAIEYK.

3 helical membrane-spanning segments follow: residues 1-21 (MNLS…NRKN), 22-42 (IILM…LILI), and 55-75 (FAIY…GILV).

It belongs to the complex I subunit 4L family.

The protein localises to the mitochondrion membrane. It catalyses the reaction a ubiquinone + NADH + 5 H(+)(in) = a ubiquinol + NAD(+) + 4 H(+)(out). In terms of biological role, core subunit of the mitochondrial membrane respiratory chain NADH dehydrogenase (Complex I) that is believed to belong to the minimal assembly required for catalysis. Complex I functions in the transfer of electrons from NADH to the respiratory chain. The immediate electron acceptor for the enzyme is believed to be ubiquinone. The sequence is that of NADH-ubiquinone oxidoreductase chain 4L (ND4L) from Trichophyton rubrum (Athlete's foot fungus).